A 338-amino-acid chain; its full sequence is tRNA N6-adenosine threonylcarbamoyltransferase (338 aa).

Fe cation-binding residues include H110 and H114. Residues 132–136 (VLSGG), D165, G178, and N274 each bind substrate. Fe cation is bound at residue D298.

It belongs to the KAE1 / TsaD family. Fe(2+) serves as cofactor.

The protein resides in the cytoplasm. It catalyses the reaction L-threonylcarbamoyladenylate + adenosine(37) in tRNA = N(6)-L-threonylcarbamoyladenosine(37) in tRNA + AMP + H(+). Required for the formation of a threonylcarbamoyl group on adenosine at position 37 (t(6)A37) in tRNAs that read codons beginning with adenine. Is involved in the transfer of the threonylcarbamoyl moiety of threonylcarbamoyl-AMP (TC-AMP) to the N6 group of A37, together with TsaE and TsaB. TsaD likely plays a direct catalytic role in this reaction. The polypeptide is tRNA N6-adenosine threonylcarbamoyltransferase (Borrelia duttonii (strain Ly)).